The sequence spans 145 residues: Brain and acute leukemia cytoplasmic protein (145 aa).

Residue Gly-2 is the site of N-myristoyl glycine attachment. Cys-3 is lipidated: S-palmitoyl cysteine. The interaction with CAMK2A stretch occupies residues Cys-3–Ala-35. The tract at residues Leu-36–Asp-113 is disordered. Residues Cys-83–Trp-106 show a composition bias toward polar residues.

Interacts with CAMK2A. Post-translationally, palmitoylation and myristoylation target the protein to the lipid rafts. Predominantly expressed in the brain (at protein level). Within the brain, found in most of forebrain structures, including the cerebral cortex, hippocampal formation, olfactory bulb, anterior olfactory nuclei, piriform cortex, tenia tecta and amygdaloid nuclei. Not detected in glial cells.

It localises to the cytoplasm. Its subcellular location is the synapse. It is found in the synaptosome. The protein localises to the membrane raft. The protein resides in the postsynaptic density. Functionally, may play a synaptic role at the postsynaptic lipid rafts possibly through interaction with CAMK2A. This Rattus norvegicus (Rat) protein is Brain and acute leukemia cytoplasmic protein (Baalc).